Reading from the N-terminus, the 228-residue chain is Thymidylate kinase (228 aa).

20-27 (GGEGSGKS) contacts ATP.

The protein belongs to the thymidylate kinase family.

The enzyme catalyses dTMP + ATP = dTDP + ADP. Its function is as follows. Phosphorylation of dTMP to form dTDP in both de novo and salvage pathways of dTTP synthesis. The polypeptide is Thymidylate kinase (Afipia carboxidovorans (strain ATCC 49405 / DSM 1227 / KCTC 32145 / OM5) (Oligotropha carboxidovorans)).